The following is a 131-amino-acid chain: Insulin-like 3 (131 aa).

The N-terminal stretch at 1 to 20 is a signal peptide; it reads MDPRLPAWALVLLGPALVFA. 3 disulfide bridges follow: cysteine 34–cysteine 116, cysteine 46–cysteine 129, and cysteine 115–cysteine 120. Positions 58–104 are cleaved as a propeptide — c peptide like; it reads PATGGDRELLQWLERRHLLHGLVADSNLTLGPGLQPLPQTSHHHRHH.

It belongs to the insulin family. As to quaternary structure, heterodimer of a B chain and an A chain linked by two disulfide bonds. Expressed in prenatal and postnatal Leydig cells. Found as well in the corpus luteum, trophoblast, fetal membranes and breast.

It is found in the secreted. Functionally, seems to play a role in testicular function. May be a trophic hormone with a role in testicular descent in fetal life. Is a ligand for LGR8 receptor. The protein is Insulin-like 3 (INSL3) of Homo sapiens (Human).